An 811-amino-acid polypeptide reads, in one-letter code: TLR4 interactor with leucine rich repeats (811 aa).

The N-terminal stretch at 1–25 (MEGVGAVRFWLVVCGCLAFPPRAES) is a signal peptide. The LRRNT domain occupies 26-57 (VCPERCDCQHPQHLLCTNRGLRAVPKTSSLPS). Residues 26 to 696 (VCPERCDCQH…AGGRGGVDYQ (671 aa)) lie on the Extracellular side of the membrane. LRR repeat units follow at residues 61-81 (VLTYSLGGNFITNITAFDFHR), 84-105 (QLRRLDLQYNQIRSLHPKTFEK), 108-129 (RLEELYLGNNLLQALAPGTLAP), 132-153 (KLRILYANGNEIGRLSRGSFEG), 156-177 (SLVKLRLDGNVLGALPDAVFAP), 180-201 (NLLYLHLEANRIRFLGKNAFTQ), 204-223 (KLRFLNLSANELQPSLRHAA), 230-251 (SLSTLILSANSLQHLGPRVFQH), 254-275 (RLGLLSLSGNQLTHLAPEAFWG), 278-298 (ALRELRLEGNRLNQLPLTLLE), 302-323 (SLEALDLSGNELSALHPATFGH), and 326-347 (RLRELSLRDNALSALSGDIFAA). Asparagine 73 carries an N-linked (GlcNAc...) asparagine glycan. Residues 359–416 (NGWTCDCRLRGLKRWMGNWHSQGRLLTVFVQCRHPPALRGKYLDYLDDQLLQNGSCVD) form the LRRCT domain. The N-linked (GlcNAc...) asparagine glycan is linked to asparagine 411. Disordered stretches follow at residues 414-460 (CVDP…QQRG) and 486-562 (RRGP…QQGR). Polar residues predominate over residues 421–430 (PTAGSRQWPI). Low complexity-rich tracts occupy residues 440–460 (PPAGLAQELPLQPQPQPQQRG) and 494–508 (QSPSAAAASGSAPQS). The span at 510 to 519 (DLHEKPERGR) shows a compositional bias: basic and acidic residues. Residues 524-545 (NLPQTEPTPTSEPASGTPSARD) are compositionally biased toward polar residues. Asparagine 589 carries an N-linked (GlcNAc...) asparagine glycan. Residues 697–717 (LLTLVLLAINALLVLLALAAW) form a helical membrane-spanning segment. The Cytoplasmic segment spans residues 718 to 809 (GSRWLRRKLR…RREDHLLQRF (92 aa)). Serine 798 bears the Phosphoserine mark.

Belongs to the lipopolysaccharide (LPS) receptor, a multi-protein complex containing at least CD14, MD-2 and TLR4. Interacts with TLR4; this interaction is greatly enhanced following LPS stimulation. Interacts with LPS. N-glycolysaled. Highly expressed in cortical astrocytes and in cerebellar granule neurons.

It localises to the membrane. In terms of biological role, component of the TLR4 signaling complex. Mediates the innate immune response to bacterial lipopolysaccharide (LPS) leading to cytokine secretion and the inflammatory response. The sequence is that of TLR4 interactor with leucine rich repeats (Tril) from Rattus norvegicus (Rat).